A 158-amino-acid polypeptide reads, in one-letter code: Regulator of sigma D (158 aa).

The protein belongs to the Rsd/AlgQ family. Interacts with RpoD.

It localises to the cytoplasm. Functionally, binds RpoD and negatively regulates RpoD-mediated transcription activation by preventing the interaction between the primary sigma factor RpoD with the catalytic core of the RNA polymerase and with promoter DNA. May be involved in replacement of the RNA polymerase sigma subunit from RpoD to RpoS during the transition from exponential growth to the stationary phase. The chain is Regulator of sigma D from Escherichia coli O127:H6 (strain E2348/69 / EPEC).